We begin with the raw amino-acid sequence, 318 residues long: L-lactate dehydrogenase (318 aa).

Residues Val-20, Asp-41, Lys-46, Tyr-71, and 85–86 (GA) contribute to the NAD(+) site. Residues Gln-88, Arg-94, and 126–129 (NPVD) contribute to the substrate site. NAD(+) contacts are provided by residues 124 to 126 (ATN) and Ser-149. 154 to 157 (DTAR) provides a ligand contact to substrate. Beta-D-fructose 1,6-bisphosphate is bound by residues Arg-159 and His-174. Catalysis depends on His-181, which acts as the Proton acceptor. Tyr-226 is modified (phosphotyrosine). Thr-235 contributes to the substrate binding site.

It belongs to the LDH/MDH superfamily. LDH family. As to quaternary structure, homotetramer.

It localises to the cytoplasm. It carries out the reaction (S)-lactate + NAD(+) = pyruvate + NADH + H(+). It participates in fermentation; pyruvate fermentation to lactate; (S)-lactate from pyruvate: step 1/1. Its activity is regulated as follows. Allosterically activated by fructose 1,6-bisphosphate (FBP). In terms of biological role, catalyzes the conversion of lactate to pyruvate. This chain is L-lactate dehydrogenase, found in Priestia megaterium (Bacillus megaterium).